The chain runs to 149 residues: 3-dehydroquinate dehydratase (149 aa).

The active-site Proton acceptor is the tyrosine 26. Residues asparagine 77, histidine 83, and aspartate 90 each coordinate substrate. The Proton donor role is filled by histidine 103. Residues 104–105 (LS) and arginine 114 each bind substrate.

This sequence belongs to the type-II 3-dehydroquinase family. In terms of assembly, homododecamer.

It carries out the reaction 3-dehydroquinate = 3-dehydroshikimate + H2O. The protein operates within metabolic intermediate biosynthesis; chorismate biosynthesis; chorismate from D-erythrose 4-phosphate and phosphoenolpyruvate: step 3/7. Catalyzes a trans-dehydration via an enolate intermediate. In Edwardsiella ictaluri (strain 93-146), this protein is 3-dehydroquinate dehydratase.